The primary structure comprises 184 residues: MSWRSEHIWIELIAGSRKISNLCWAFILFLGSLGFFLVGTSSYLGRNLISFFPLQQIIFFPQGIVMSFYGIAGLFISSYLWCTISWNVGSGYDLFNRKEGIVCIFRWGFPGINRRIFLRFLLKDIRSVRIEVEEGIYAGRVLYMDIRGQRAIPLTRTDENLTPGEIEKKAAELAYFLRVPIEVF.

2 helical membrane passes run 19–39 (ISNL…FLVG) and 57–77 (IIFF…LFIS).

Belongs to the Ycf4 family.

The protein localises to the plastid thylakoid membrane. Seems to be required for the assembly of the photosystem I complex. The protein is Photosystem I assembly protein Ycf4 of Cuscuta exaltata (Tall dodder).